The primary structure comprises 520 residues: Sensory neuron membrane protein 2 (520 aa).

Topologically, residues 1 to 7 (MLGKHSK) are cytoplasmic. A helical transmembrane segment spans residues 8 to 28 (IFFGVSLIFLVIAIVLASWGF). Residues 29–468 (QKIVNKQIQK…DSHKLLGYVE (440 aa)) are Extracellular-facing. N-linked (GlcNAc...) asparagine glycans are attached at residues N44, N67, N104, N228, N271, N313, and N342. Intrachain disulfides connect C267/C337, C298/C361, and C339/C350. The chain crosses the membrane as a helical span at residues 469–489 (VAKWFLLTIAIISVIASAVAV). Topologically, residues 490 to 520 (ARANALLSWPRNSNSVSFILGPSVTQVNKGN) are cytoplasmic.

The protein belongs to the CD36 family. As to expression, localizes to cells surrounding the sensory neurons in the antenna. Associate in a ratio of 2:1 with the neurons expressing the other subtype SNMP1.

The protein resides in the cell membrane. Its function is as follows. Plays an olfactory role that is not restricted to pheromone sensitivity. May play a role in the elimination of lipophilic components from the sensillum lymph. The polypeptide is Sensory neuron membrane protein 2 (Heliothis virescens (Tobacco budworm moth)).